We begin with the raw amino-acid sequence, 275 residues long: Mitochondrial outer membrane porin (275 aa).

Belongs to the eukaryotic mitochondrial porin (TC 1.B.8.1) family.

It is found in the mitochondrion outer membrane. Its function is as follows. Forms a channel through the cell membrane that allows diffusion of small hydrophilic molecules. The channel adopts an open conformation at low or zero membrane potential and a closed conformation at potentials above 30-40 mV. The open state has a weak anion selectivity whereas the closed state is cation-selective. This Triticum aestivum (Wheat) protein is Mitochondrial outer membrane porin (VDAC1).